The following is a 146-amino-acid chain: 3-hydroxyacyl-[acyl-carrier-protein] dehydratase FabZ (146 aa).

The active site involves H48.

The protein belongs to the thioester dehydratase family. FabZ subfamily.

The protein localises to the cytoplasm. It carries out the reaction a (3R)-hydroxyacyl-[ACP] = a (2E)-enoyl-[ACP] + H2O. Involved in unsaturated fatty acids biosynthesis. Catalyzes the dehydration of short chain beta-hydroxyacyl-ACPs and long chain saturated and unsaturated beta-hydroxyacyl-ACPs. The polypeptide is 3-hydroxyacyl-[acyl-carrier-protein] dehydratase FabZ (Paracidovorax citrulli (strain AAC00-1) (Acidovorax citrulli)).